The chain runs to 224 residues: UPF0758 protein Mmwyl1_0624 (224 aa).

Residues 102-224 (VFASAEHVRT…PVSLAERGLV (123 aa)) enclose the MPN domain. The Zn(2+) site is built by His173, His175, and Asp186. Positions 173–186 (HNHPSGIAEPSQAD) match the JAMM motif motif.

This sequence belongs to the UPF0758 family.

This is UPF0758 protein Mmwyl1_0624 from Marinomonas sp. (strain MWYL1).